We begin with the raw amino-acid sequence, 949 residues long: General transcription factor II-I repeat domain-containing protein 2B (949 aa).

2 GTF2I-like repeats span residues 98 to 192 (QVHS…QLGG) and 323 to 417 (LSSI…SNVG).

Belongs to the TFII-I family. As to expression, ubiquitous.

It localises to the nucleus. In Homo sapiens (Human), this protein is General transcription factor II-I repeat domain-containing protein 2B (GTF2IRD2B).